Reading from the N-terminus, the 347-residue chain is UDP-N-acetylenolpyruvoylglucosamine reductase (347 aa).

An FAD-binding PCMH-type domain is found at 33–221 (AGGSAERIYL…SGAWFALPRD (189 aa)). Arginine 180 is an active-site residue. Serine 250 functions as the Proton donor in the catalytic mechanism. Glutamate 320 is an active-site residue.

It belongs to the MurB family. The cofactor is FAD.

The protein localises to the cytoplasm. It carries out the reaction UDP-N-acetyl-alpha-D-muramate + NADP(+) = UDP-N-acetyl-3-O-(1-carboxyvinyl)-alpha-D-glucosamine + NADPH + H(+). Its pathway is cell wall biogenesis; peptidoglycan biosynthesis. Cell wall formation. The sequence is that of UDP-N-acetylenolpyruvoylglucosamine reductase from Nitrosospira multiformis (strain ATCC 25196 / NCIMB 11849 / C 71).